The sequence spans 329 residues: uncharacterized protein (329 aa).

7 consecutive transmembrane segments (helical) span residues 29-49, 78-98, 120-140, 164-184, 217-237, 260-280, and 299-319; these read IVLWALFVFCAIATAFLAISH, VLVAQILTPIFTVLLILCWMG, KKWLLWAIFIPQLTLTNSLLV, WMIGFFVVWFIQLFLGFLIYL, YFFLGLIFAFMDLTIIVLLVI, FFWTALAIDVIGLIMTISFIV, and GSSLMALITIATLVTTILLFI.

This sequence to M.pneumoniae MPN_129.

Its subcellular location is the cell membrane. This is an uncharacterized protein from Mycoplasma pneumoniae (strain ATCC 29342 / M129 / Subtype 1) (Mycoplasmoides pneumoniae).